Reading from the N-terminus, the 177-residue chain is Cytochrome c-type biogenesis protein CcmE (177 aa).

The Cytoplasmic segment spans residues 1-7 (MTRKSRR). A helical; Signal-anchor for type II membrane protein membrane pass occupies residues 8–28 (LILIAACGAVLALALGLILSA). Over 29 to 177 (MSGSIVFFRS…DATLGQRSER (149 aa)) the chain is Periplasmic. Heme-binding residues include H122 and Y126. The interval 133–177 (DALKAQGRWQEGGSKEAPKDASKAAPKDAAKPETADATLGQRSER) is disordered. Residues 145–166 (GSKEAPKDASKAAPKDAAKPET) show a composition bias toward basic and acidic residues.

Belongs to the CcmE/CycJ family.

It localises to the cell inner membrane. Functionally, heme chaperone required for the biogenesis of c-type cytochromes. Transiently binds heme delivered by CcmC and transfers the heme to apo-cytochromes in a process facilitated by CcmF and CcmH. In Methylorubrum extorquens (strain PA1) (Methylobacterium extorquens), this protein is Cytochrome c-type biogenesis protein CcmE.